A 299-amino-acid polypeptide reads, in one-letter code: Hydroxymethylglutaryl-CoA lyase YngG (299 aa).

The 268-residue stretch at 7–274 folds into the Pyruvate carboxyltransferase domain; that stretch reads VTIKEVGPRD…KTNVKLEKLL (268 aa). Arg-15 contacts substrate. A divalent metal cation contacts are provided by Asp-16, His-207, and His-209. The active site involves Cys-240. Asn-249 contributes to the a divalent metal cation binding site.

Belongs to the HMG-CoA lyase family. In terms of assembly, homodimer and homotetramer.

The enzyme catalyses (3S)-3-hydroxy-3-methylglutaryl-CoA = acetoacetate + acetyl-CoA. Its pathway is metabolic intermediate metabolism; (S)-3-hydroxy-3-methylglutaryl-CoA degradation; acetoacetate from (S)-3-hydroxy-3-methylglutaryl-CoA: step 1/1. Functionally, involved in the catabolism of branched amino acids such as leucine. The polypeptide is Hydroxymethylglutaryl-CoA lyase YngG (yngG) (Bacillus subtilis (strain 168)).